Reading from the N-terminus, the 496-residue chain is Aspartyl/glutamyl-tRNA(Asn/Gln) amidotransferase subunit B (496 aa).

This sequence belongs to the GatB/GatE family. GatB subfamily. As to quaternary structure, heterotrimer of A, B and C subunits.

The catalysed reaction is L-glutamyl-tRNA(Gln) + L-glutamine + ATP + H2O = L-glutaminyl-tRNA(Gln) + L-glutamate + ADP + phosphate + H(+). The enzyme catalyses L-aspartyl-tRNA(Asn) + L-glutamine + ATP + H2O = L-asparaginyl-tRNA(Asn) + L-glutamate + ADP + phosphate + 2 H(+). Allows the formation of correctly charged Asn-tRNA(Asn) or Gln-tRNA(Gln) through the transamidation of misacylated Asp-tRNA(Asn) or Glu-tRNA(Gln) in organisms which lack either or both of asparaginyl-tRNA or glutaminyl-tRNA synthetases. The reaction takes place in the presence of glutamine and ATP through an activated phospho-Asp-tRNA(Asn) or phospho-Glu-tRNA(Gln). This is Aspartyl/glutamyl-tRNA(Asn/Gln) amidotransferase subunit B from Picosynechococcus sp. (strain ATCC 27264 / PCC 7002 / PR-6) (Agmenellum quadruplicatum).